The sequence spans 399 residues: LEM domain-containing protein Bocksbeutel (399 aa).

Residues 4-48 form the LEM domain; that stretch reads LSYLDTLGNKELLAKCLEHGLPGVPVTDSTRSVIIRRLKAKITGV. 3 disordered regions span residues 49–103, 119–141, and 233–287; these read PLNK…EQSR, SVQT…SYMV, and NSTS…SNLA. Polar residues-rich tracts occupy residues 68 to 77 and 89 to 99; these read HGSQVTTPTS and GRTSSNNNKIS. Residues 233–256 show a composition bias toward polar residues; sequence NSTSYEESSTYNPKLSPISPRNTF. Residues 377–397 traverse the membrane as a helical segment; it reads FYLILVVSVMLATMVYVVLTP.

It localises to the nucleus inner membrane. Its subcellular location is the cytoplasm. The protein localises to the nucleus. The protein resides in the nucleoplasm. It is found in the endoplasmic reticulum. Inner nuclear membrane protein. May have a role in maintaining the structural integrity of the nuclear lamina. During pupal development, plays essential and redundant functions with the other LEM domain proteins; MAN1 and Ote. Also has a redundant but important role with Ote in larval development. In Drosophila melanogaster (Fruit fly), this protein is LEM domain-containing protein Bocksbeutel.